Consider the following 179-residue polypeptide: MAKLHDYYRDQVVNELKDKFNYKSVMQVPRIEKITLNMGVGEALTDKKLLDNAVADLAAISGQKPLITKARKSVAGFKIRQGYPIGCKVTLRGERMWEFFERLITIAVPRIRDFRGLSAKSFDGRGNYSMGVREQIIFPEIDYDKVDRVRGLDITITTTAKSDEEGQALLAAFNFPFRK.

This sequence belongs to the universal ribosomal protein uL5 family. Part of the 50S ribosomal subunit; part of the 5S rRNA/L5/L18/L25 subcomplex. Contacts the 5S rRNA and the P site tRNA. Forms a bridge to the 30S subunit in the 70S ribosome.

This is one of the proteins that bind and probably mediate the attachment of the 5S RNA into the large ribosomal subunit, where it forms part of the central protuberance. In the 70S ribosome it contacts protein S13 of the 30S subunit (bridge B1b), connecting the 2 subunits; this bridge is implicated in subunit movement. Contacts the P site tRNA; the 5S rRNA and some of its associated proteins might help stabilize positioning of ribosome-bound tRNAs. The sequence is that of Large ribosomal subunit protein uL5 from Pasteurella multocida (strain Pm70).